Here is a 441-residue protein sequence, read N- to C-terminus: Carbohydrate sulfotransferase 3 (441 aa).

The Cytoplasmic portion of the chain corresponds to 1-4 (MKMR). A helical; Signal-anchor for type II membrane protein membrane pass occupies residues 5–21 (SKYAIILFFVVALVIIE). The Lumenal portion of the chain corresponds to 22–441 (KERNIISRVS…LLENRNFWIT (420 aa)). 2 N-linked (GlcNAc...) asparagine glycosylation sites follow: asparagine 47 and asparagine 58. 106 to 112 (TRTGSSF) contributes to the 3'-phosphoadenylyl sulfate binding site. Residue asparagine 221 is glycosylated (N-linked (GlcNAc...) asparagine). 3'-phosphoadenylyl sulfate is bound at residue 266-274 (RDPRAVLAS). Residue asparagine 427 is glycosylated (N-linked (GlcNAc...) asparagine).

Belongs to the sulfotransferase 1 family. Gal/GlcNAc/GalNAc subfamily. Post-translationally, N-glycosylated. In electric organ, it is moderately expressed in spinal cord and electric lobe and undetectable in non-neural tissues. Expressed in a punctate distribution in the innervated portion of electrocytes. In the CNS, it is localized within the somas of motor neurons and neurons of the electromotor nucleus.

Its subcellular location is the golgi apparatus membrane. It catalyses the reaction chondroitin beta-D-glucuronate + n 3'-phosphoadenylyl sulfate = chondroitin 6'-sulfate + n adenosine 3',5'-bisphosphate + n H(+). The enzyme catalyses 3'-phosphoadenylyl sulfate + keratan = adenosine 3',5'-bisphosphate + keratan 6'-sulfate.. In terms of biological role, sulfotransferase that utilizes 3'-phospho-5'-adenylyl sulfate (PAPS) as sulfonate donor to catalyze the transfer of sulfate to position 6 of the N-acetylgalactosamine (GalNAc) residue of chondroitin. Chondroitin sulfate constitutes the predominant proteoglycan present in cartilage and is distributed on the surfaces of many cells and extracellular matrices. Catalyzes with a lower efficiency the sulfation of Gal residues of keratan sulfate, another glycosaminoglycan. Can also catalyze the sulfation of the Gal residues in sialyl N-acetyllactosamine (sialyl LacNAc) oligosaccharides. The sequence is that of Carbohydrate sulfotransferase 3 (CHST3) from Tetronarce californica (Pacific electric ray).